Reading from the N-terminus, the 100-residue chain is Large ribosomal subunit protein uL23 (100 aa).

Belongs to the universal ribosomal protein uL23 family. In terms of assembly, part of the 50S ribosomal subunit. Contacts protein L29, and trigger factor when it is bound to the ribosome.

Functionally, one of the early assembly proteins it binds 23S rRNA. One of the proteins that surrounds the polypeptide exit tunnel on the outside of the ribosome. Forms the main docking site for trigger factor binding to the ribosome. This chain is Large ribosomal subunit protein uL23, found in Mycobacterium tuberculosis (strain ATCC 25177 / H37Ra).